Here is a 483-residue protein sequence, read N- to C-terminus: Zinc finger CCCH domain-containing protein 25 (483 aa).

A C3H1-type zinc finger spans residues R157–P184. The region spanning R228–P301 is the RRM domain. Disordered stretches follow at residues W298–V317 and P336–Q483. The span at P336 to P351 shows a compositional bias: pro residues. Low complexity predominate over residues S370–S380. A compositionally biased stretch (polar residues) spans D381–T391. Composition is skewed to low complexity over residues M392–H401 and Y409–Y423. A compositionally biased stretch (pro residues) spans Q438–D459. Positions S460–A476 are enriched in low complexity.

The sequence is that of Zinc finger CCCH domain-containing protein 25 from Arabidopsis thaliana (Mouse-ear cress).